The sequence spans 245 residues: Precorrin-2 C(20)-methyltransferase (245 aa).

Belongs to the precorrin methyltransferase family. In terms of assembly, homodimer.

The catalysed reaction is precorrin-2 + S-adenosyl-L-methionine = precorrin-3A + S-adenosyl-L-homocysteine + H(+). It functions in the pathway cofactor biosynthesis; adenosylcobalamin biosynthesis; cob(II)yrinate a,c-diamide from precorrin-2 (aerobic route): step 1/10. Its function is as follows. Methylates precorrin-2 at the C-20 position to produce precorrin-3A. The polypeptide is Precorrin-2 C(20)-methyltransferase (cobI) (Sinorhizobium sp).